The chain runs to 2742 residues: Polycystin-1-like protein 1 (2742 aa).

Over 1 to 1602 (MFCLWIFSLA…LDQFLSVSRD (1602 aa)) the chain is Extracellular. N-linked (GlcNAc...) asparagine glycosylation is found at N35, N133, N149, N220, and N267. 2 consecutive PKD domains span residues 286 to 372 (AVRI…VKLN) and 370 to 454 (KLNR…PCQP). N-linked (GlcNAc...) asparagine glycosylation is found at N383, N397, N486, N545, N693, N709, and N735. Positions 452–1338 (CQPPPVKNLG…ITFFLPASLI (887 aa)) constitute an REJ domain. Disordered regions lie at residues 767 to 829 (SPSR…QSDP) and 846 to 908 (DLRG…RPSV). Over residues 779–799 (SELTDSPVSSVTVGFSGSESF) the composition is skewed to polar residues. Positions 880–893 (SFPSDSDSFSHSSS) are enriched in low complexity. N1080, N1101, N1201, N1318, N1437, N1490, and N1568 each carry an N-linked (GlcNAc...) asparagine glycan. Residues 1436 to 1587 (HNFSITQEHL…KVLQQQIQSS (152 aa)) form the GAIN-B domain. Intrachain disulfides connect C1541-C1569 and C1556-C1571. A GPS region spans residues 1541–1587 (CLSWEDQQGSWTQNGCRAQTNDKTSAVNCSCHHLKPLKVLQQQIQSS). Residues 1603-1623 (LTVVFVLLLCVSLNIPVLVWC) form a helical membrane-spanning segment. Over 1624 to 1812 (KKTDATSEEN…SPHLFTRAQR (189 aa)) the chain is Cytoplasmic. The region spanning 1648-1769 (HFYAVTVHTG…GDGQVERMLR (122 aa)) is the PLAT domain. The chain crosses the membrane as a helical span at residues 1813 to 1833 (LCVCLLLFLGYACVNIIITHQ). Topologically, residues 1834–1851 (RDDQLPFDLGVIDVTSVS) are extracellular. Residues 1852–1872 (IATGLVSVVAVLPVAMVISFL) traverse the membrane as a helical segment. The Cytoplasmic portion of the chain corresponds to 1873-2005 (FRVKSGRMTL…YRLASLLYHC (133 aa)). Residues 2006–2026 (VAWTLCLLFCLSCLILSAVLG) form a helical membrane-spanning segment. The Extracellular segment spans residues 2027-2040 (TRLNSGKILHWIHS). A helical membrane pass occupies residues 2041 to 2061 (LFVSLTFCFFVIHPATILVLA). The Cytoplasmic segment spans residues 2062-2151 (AVVSWRFKRS…KQAVIHKMLR (90 aa)). Residues 2152 to 2172 (DLCLCGSMFFLMVCITYGSPV) form a helical membrane-spanning segment. The Extracellular segment spans residues 2173–2344 (DEHYPLNAAF…QSVRLYHSPS (172 aa)). A glycan (N-linked (GlcNAc...) asparagine) is linked at N2218. Residues 2345-2365 (MLDYTVMVWQLLFLLLSLVNL) form a helical membrane-spanning segment. The Cytoplasmic portion of the chain corresponds to 2366 to 2378 (YHQTSTAAQHGLM). A helical transmembrane segment spans residues 2379-2401 (GYWKTTSISVEVSLVIVSLVYYV). At 2402 to 2442 (HYVYHPTMVMEVAEQLRRNHREHVDVSTLANSEQFSRTLRG) the chain is on the extracellular side. Residues 2443–2463 (IILFLLAVKCVTVVRLNRILA) traverse the membrane as a helical segment. Over 2464 to 2467 (PSMP) the chain is Cytoplasmic. A helical membrane pass occupies residues 2468 to 2488 (LLSLSSLLWPAISGLLLLSIF). The Extracellular portion of the chain corresponds to 2489 to 2528 (SCMGRLLYIERTFHSIQTVLWHFWSLRKSRDLISLWRDFY). Residues 2529 to 2549 (YFGLLYASSAMLTTMVFAVMI) form a helical membrane-spanning segment. Over 2550-2742 (RKAKRSPSTK…LVHHEQGTKN (193 aa)) the chain is Cytoplasmic.

The protein belongs to the polycystin family. In terms of assembly, heterodimer. Interacts with pkd2 to form a calcium channel. Interacts with pkd2l1 to form ciliary calcium channel. As to expression, expressed in Kupffer's vesicle, an organ equivalent to the node.

The protein localises to the cell projection. It is found in the cilium membrane. Functionally, component of a calcium-permeant ion channel formed by PKD1L2 and PKD1L1 in primary cilia, where it controls cilium calcium concentration, without affecting cytoplasmic calcium concentration, and regulates sonic hedgehog/SHH signaling and GLI2 transcription. The PKD1L1:PKD2L1 channel complex is mechanosensitive only at high pressures and is highly temperature sensitive. Also involved in left/right axis specification downstream of nodal flow by forming a complex with PKD2 in cilia to facilitate flow detection in left/right patterning. The protein is Polycystin-1-like protein 1 of Oryzias latipes (Japanese rice fish).